The chain runs to 241 residues: Large ribosomal subunit protein uL30 (241 aa).

The disordered stretch occupies residues 1–25 (MASTLKPETLVKKSKAQQKTAEERA).

This sequence belongs to the universal ribosomal protein uL30 family.

This Debaryomyces hansenii (strain ATCC 36239 / CBS 767 / BCRC 21394 / JCM 1990 / NBRC 0083 / IGC 2968) (Yeast) protein is Large ribosomal subunit protein uL30 (RPL7).